Consider the following 447-residue polypeptide: NADP-specific glutamate dehydrogenase (447 aa).

The substrate site is built by Lys-92, Gln-113, and Lys-116. Catalysis depends on Lys-128, which acts as the Proton donor. Residue Gly-167 coordinates substrate. Residues Thr-211 and Asn-242 each contribute to the NADP(+) site. A substrate-binding site is contributed by Ser-380.

Belongs to the Glu/Leu/Phe/Val dehydrogenases family. In terms of assembly, homohexamer.

The enzyme catalyses L-glutamate + NADP(+) + H2O = 2-oxoglutarate + NH4(+) + NADPH + H(+). Its activity is regulated as follows. Competitively inhibited by homoserine and by glutamine. Catalyzes the reversible oxidative deamination of glutamate to alpha-ketoglutarate and ammonia. The polypeptide is NADP-specific glutamate dehydrogenase (Escherichia coli (strain K12)).